The following is a 69-amino-acid chain: Light-harvesting protein B-1015 beta chain (69 aa).

Residues 2-21 (ADLKPSLTGLTEEEAKEFHG) lie on the Cytoplasmic side of the membrane. Positions 20 and 38 each coordinate a bacteriochlorophyll. Residues 22 to 44 (IFVTSTVLYLATAVIVHYLVWTA) form a helical membrane-spanning segment. The Periplasmic segment spans residues 45-56 (RPWIAPIPKGWV). Residues 57 to 69 (NLEGVQSALSYLV) constitute a propeptide that is removed on maturation.

It belongs to the antenna complex beta subunit family. In terms of assembly, the core complex is formed by different alpha and beta chains, binding bacteriochlorophyll molecules, and arranged most probably in tetrameric structures disposed around the reaction center. The non-pigmented gamma chains may constitute additional components.

It localises to the cell inner membrane. Its function is as follows. Antenna complexes are light-harvesting systems, which transfer the excitation energy to the reaction centers. In Blastochloris viridis (Rhodopseudomonas viridis), this protein is Light-harvesting protein B-1015 beta chain (pufB).